A 384-amino-acid chain; its full sequence is Chaperone protein DnaJ (384 aa).

A J domain is found at 4-68; the sequence is DFYEILGVSR…EKRQMYDQMG (65 aa). Disordered regions lie at residues 29–60 and 73–131; these read REYHPDVSDDPDAEEKFKQAKKAKEVLTDEEK and EQAE…GQDL. The segment covering 42–60 has biased composition (basic and acidic residues); it reads EEKFKQAKKAKEVLTDEEK. Residues 80–101 are compositionally biased toward gly residues; it reads GAGGGGGRGGMGGDPFGGGAGG. Positions 102-111 are enriched in low complexity; it reads FDMQDIFDQF. The span at 112–121 shows a compositional bias: gly residues; sequence FGGGGRGGRG. The CR-type zinc finger occupies 145-227; sequence GATKQLNVTR…CRGNGVVQND (83 aa). C158, C161, C175, and C178 together coordinate Zn(2+). CXXCXGXG motif repeat units follow at residues 158–165, 175–182, 201–208, and 215–222; these read CDDCDGAG, CPECNGQG, CRRCDGEG, and CSTCRGNG. The tract at residues 160 to 191 is disordered; sequence DCDGAGHPPGADSETCPECNGQGQTTQVQQTP. Residues 180–190 are compositionally biased toward low complexity; that stretch reads GQGQTTQVQQT. The Zn(2+) site is built by C201, C204, C215, and C218.

This sequence belongs to the DnaJ family. As to quaternary structure, homodimer. Zn(2+) is required as a cofactor.

It localises to the cytoplasm. Its function is as follows. Participates actively in the response to hyperosmotic and heat shock by preventing the aggregation of stress-denatured proteins and by disaggregating proteins, also in an autonomous, DnaK-independent fashion. Unfolded proteins bind initially to DnaJ; upon interaction with the DnaJ-bound protein, DnaK hydrolyzes its bound ATP, resulting in the formation of a stable complex. GrpE releases ADP from DnaK; ATP binding to DnaK triggers the release of the substrate protein, thus completing the reaction cycle. Several rounds of ATP-dependent interactions between DnaJ, DnaK and GrpE are required for fully efficient folding. Also involved, together with DnaK and GrpE, in the DNA replication of plasmids through activation of initiation proteins. This Haloarcula marismortui (strain ATCC 43049 / DSM 3752 / JCM 8966 / VKM B-1809) (Halobacterium marismortui) protein is Chaperone protein DnaJ.